The chain runs to 89 residues: Small ribosomal subunit protein uS15 (89 aa).

Belongs to the universal ribosomal protein uS15 family. As to quaternary structure, part of the 30S ribosomal subunit. Forms a bridge to the 50S subunit in the 70S ribosome, contacting the 23S rRNA.

One of the primary rRNA binding proteins, it binds directly to 16S rRNA where it helps nucleate assembly of the platform of the 30S subunit by binding and bridging several RNA helices of the 16S rRNA. In terms of biological role, forms an intersubunit bridge (bridge B4) with the 23S rRNA of the 50S subunit in the ribosome. This chain is Small ribosomal subunit protein uS15, found in Buchnera aphidicola subsp. Cinara cedri (strain Cc).